Consider the following 74-residue polypeptide: uncharacterized protein (74 aa).

This is an uncharacterized protein from Salmonella typhimurium.